A 94-amino-acid polypeptide reads, in one-letter code: Large ribosomal subunit protein bL27 (94 aa).

The propeptide occupies 1 to 9 (MLKLNLQFF).

Belongs to the bacterial ribosomal protein bL27 family. Post-translationally, the N-terminus is cleaved by ribosomal processing cysteine protease Prp.

This chain is Large ribosomal subunit protein bL27, found in Staphylococcus epidermidis (strain ATCC 35984 / DSM 28319 / BCRC 17069 / CCUG 31568 / BM 3577 / RP62A).